A 1685-amino-acid polypeptide reads, in one-letter code: MKLRGVSLAAGLFLLALSLWGQPAEAAACYGCSPGSKCDCSGIKGEKGERGFPGLEGHPGLPGFPGPEGPPGPRGQKGDDGIPGPPGPKGIRGPPGLPGFPGTPGLPGMPGHDGAPGPQGIPGCNGTKGERGFPGSPGFPGLQGPPGPPGIPGMKGEPGSIIMSSLPGPKGNPGYPGPPGIQGLPGPTGIPGPIGPPGPPGLMGPPGPPGLPGPKGNMGLNFQGPKGEKGEQGLQGPPGPPGQISEQKRPIDVEFQKGDQGLPGDRGPPGPPGIRGPPGPPGGEKGEKGEQGEPGKRGKPGKDGENGQPGIPGLPGDPGYPGEPGRDGEKGQKGDTGPPGPPGLVIPRPGTGITIGEKGNIGLPGLPGEKGERGFPGIQGPPGLPGPPGAAVMGPPGPPGFPGERGQKGDEGPPGISIPGPPGLDGQPGAPGLPGPPGPAGPHIPPSDEICEPGPPGPPGSPGDKGLQGEQGVKGDKGDTCFNCIGTGISGPPGQPGLPGLPGPPGSLGFPGQKGEKGQAGATGPKGLPGIPGAPGAPGFPGSKGEPGDILTFPGMKGDKGELGSPGAPGLPGLPGTPGQDGLPGLPGPKGEPGGITFKGERGPPGNPGLPGLPGNIGPMGPPGFGPPGPVGEKGIQGVAGNPGQPGIPGPKGDPGQTITQPGKPGLPGNPGRDGDVGLPGDPGLPGQPGLPGIPGSKGEPGIPGIGLPGPPGPKGFPGIPGPPGAPGTPGRIGLEGPPGPPGFPGPKGEPGFALPGPPGPPGLPGFKGALGPKGDRGFPGPPGPPGRTGLDGLPGPKGDVGPNGQPGPMGPPGLPGIGVQGPPGPPGIPGPIGQPGLHGIPGEKGDPGPPGLDVPGPPGERGSPGIPGAPGPIGPPGSPGLPGKAGASGFPGTKGEMGMMGPPGPPGPLGIPGRSGVPGLKGDDGLQGQPGLPGPTGEKGSKGEPGLPGPPGPMDPNLLGSKGEKGEPGLPGIPGVSGPKGYQGLPGDPGQPGLSGQPGLPGPPGPKGNPGLPGQPGLIGPPGLKGTIGDMGFPGPQGVEGPPGPSGVPGQPGSPGLPGQKGDKGDPGISSIGLPGLPGPKGEPGLPGYPGNPGIKGSVGDPGLPGLPGTPGAKGQPGLPGFPGTPGPPGPKGISGPPGNPGLPGEPGPVGGGGHPGQPGPPGEKGKPGQDGIPGPAGQKGEPGQPGFGNPGPPGLPGLSGQKGDGGLPGIPGNPGLPGPKGEPGFHGFPGVQGPPGPPGSPGPALEGPKGNPGPQGPPGRPGLPGPEGPPGLPGNGGIKGEKGNPGQPGLPGLPGLKGDQGPPGLQGNPGRPGLNGMKGDPGLPGVPGFPGMKGPSGVPGSAGPEGEPGLIGPPGPPGLPGPSGQSIIIKGDAGPPGIPGQPGLKGLPGPQGPQGLPGPTGPPGDPGRNGLPGFDGAGGRKGDPGLPGQPGTRGLDGPPGPDGLQGPPGPPGTSSVAHGFLITRHSQTTDAPQCPQGTLQVYEGFSLLYVQGNKRAHGQDLGTAGSCLRRFSTMPFMFCNINNVCNFASRNDYSYWLSTPEPMPMSMQPLKGQSIQPFISRCAVCEAPAVVIAVHSQTIQIPHCPQGWDSLWIGYSFMMHTSAGAEGSGQALASPGSCLEEFRSAPFIECHGRGTCNYYANSYSFWLATVDVSDMFSKPQSETLKAGDLRTRISRCQVCMKRT.

An N-terminal signal peptide occupies residues 1–26 (MKLRGVSLAAGLFLLALSLWGQPAEA). A nonhelical region (NC2) region spans residues 27–41 (AACYGCSPGSKCDCS). The interval 42-1456 (GIKGEKGERG…QGPPGPPGTS (1415 aa)) is triple-helical region. Residues 49 to 1459 (ERGFPGLEGH…PGPPGTSSVA (1411 aa)) form a disordered region. The segment covering 52–61 (FPGLEGHPGL) has biased composition (low complexity). Residues 62–73 (PGFPGPEGPPGP) show a composition bias toward pro residues. Asn-125 carries an N-linked (GlcNAc...) asparagine glycan. The span at 188–212 (TGIPGPIGPPGPPGLMGPPGPPGLP) shows a compositional bias: pro residues. Over residues 214 to 225 (PKGNMGLNFQGP) the composition is skewed to low complexity. The segment covering 246-257 (EQKRPIDVEFQK) has biased composition (basic and acidic residues). Pro residues predominate over residues 266 to 281 (RGPPGPPGIRGPPGPP). Composition is skewed to basic and acidic residues over residues 284–305 (EKGE…KDGE) and 324–333 (PGRDGEKGQK). Low complexity predominate over residues 413 to 430 (PPGISIPGPPGLDGQPGA). 4 stretches are compositionally biased toward pro residues: residues 431–445 (PGLP…PHIP), 493–505 (PGQP…PGPP), 620–630 (MGPPGFGPPGP), and 709–727 (PGPP…PGAP). Low complexity predominate over residues 788–797 (RTGLDGLPGP). 2 stretches are compositionally biased toward pro residues: residues 848-859 (PGPPGLDVPGPP) and 868-880 (PGAP…PGSP). Composition is skewed to low complexity over residues 882–901 (LPGK…MGMM), 912–931 (IPGR…QGQP), 983–999 (YQGL…SGQP), 1010–1026 (NPGL…PGLK), and 1111–1120 (TPGAKGQPGL). The segment covering 1139-1148 (PGNPGLPGEP) has biased composition (pro residues). Gly residues-rich tracts occupy residues 1149–1158 (GPVGGGGHPG) and 1202–1211 (GQKGDGGLPG). Pro residues-rich tracts occupy residues 1234-1243 (QGPPGPPGSP) and 1256-1274 (PQGP…PPGL). The span at 1295-1308 (LPGLKGDQGPPGLQ) shows a compositional bias: low complexity. Residues 1353–1362 (IGPPGPPGLP) show a composition bias toward pro residues. Positions 1461–1685 (GFLITRHSQT…SRCQVCMKRT (225 aa)) constitute a Collagen IV NC1 domain. 6 disulfides stabilise this stretch: Cys-1476–Cys-1567, Cys-1509–Cys-1564, Cys-1521–Cys-1527, Cys-1586–Cys-1681, Cys-1620–Cys-1678, and Cys-1632–Cys-1638. Met-1549 participates in a covalent cross-link: S-Lysyl-methionine sulfilimine (Met-Lys) (interchain with K-1667). Residue Lys-1667 forms an S-Lysyl-methionine sulfilimine (Lys-Met) (interchain with M-1549) linkage.

It belongs to the type IV collagen family. As to quaternary structure, there are six type IV collagen isoforms, alpha 1(IV)-alpha 6(IV), each of which can form a triple helix structure with 2 other chains to generate type IV collagen network. Prolines at the third position of the tripeptide repeating unit (G-X-Y) are hydroxylated in some or all of the chains. Post-translationally, type IV collagens contain numerous cysteine residues which are involved in inter- and intramolecular disulfide bonding. 12 of these, located in the NC1 domain, are conserved in all known type IV collagens. In terms of processing, the trimeric structure of the NC1 domains is stabilized by covalent bonds between Lys and Met residues. In terms of tissue distribution, isoform 2 is found in kidney.

It is found in the secreted. The protein resides in the extracellular space. Its subcellular location is the extracellular matrix. The protein localises to the basement membrane. Its function is as follows. Type IV collagen is the major structural component of glomerular basement membranes (GBM), forming a 'chicken-wire' meshwork together with laminins, proteoglycans and entactin/nidogen. The chain is Collagen alpha-5(IV) chain (COL4A5) from Homo sapiens (Human).